An 855-amino-acid chain; its full sequence is Homeobox-leucine zipper protein HOX33 (855 aa).

Residues 1–21 are disordered; it reads MAAAAVGGRGERLSSSSPTAA. Positions 26–89 form a DNA-binding region, homeobox; that stretch reads DAGKYVRYTP…NRRCREKQRK (64 aa). Positions 84–126 form a coiled coil; the sequence is REKQRKEASRLQTVNRKLNAMNKLLMEENDRLQKQVSRLVYEN. An START domain is found at 168-390; sequence DANNPAGLLA…LRHIRQIAHE (223 aa).

It belongs to the HD-ZIP homeobox family. Class III subfamily. In terms of tissue distribution, expressed in seedlings, roots, stems, leaf sheaths and blades and panicles.

It is found in the nucleus. Probable transcription factor. This is Homeobox-leucine zipper protein HOX33 (HOX33) from Oryza sativa subsp. indica (Rice).